A 229-amino-acid polypeptide reads, in one-letter code: Histone H3-like centromeric protein CSE4 (229 aa).

Polar residues predominate over residues 1 to 35 (MSSKQQWVSSAIQSDSSGRSLSNVNRLAGDQQSIN). Residues 1–78 (MSSKQQWVSS…DIETDYEDQA (78 aa)) form a disordered region. The segment covering 53–68 (PRREERRRYESSKSDL) has biased composition (basic and acidic residues). Positions 115–132 (KRREKQRKQSLKRVEKKY) match the Nuclear localization signal motif. The H3-like stretch occupies residues 132-229 (YTPSELALYE…LARRIRGQFI (98 aa)).

It belongs to the histone H3 family. As to quaternary structure, component of centromeric nucleosomes, where DNA is wrapped around a histone octamer core. The octamer contains two molecules each of H2A, H2B, CSE4/CENPA and H4 assembled in one CSE4-H4 heterotetramer and two H2A-H2B heterodimers. Interacts with the inner kinetochore. Interacts with the central kinetochore protein CTF19. Interacts with YTA7. Post-translationally, ubiquitinated. Is degraded through ubiquitin-mediated proteolysis when not protected by its association to the kinetochore.

It localises to the nucleus. Its subcellular location is the chromosome. The protein localises to the centromere. Functionally, histone H3-like nucleosomal protein that is specifically found in centromeric nucleosomes. Replaces conventional H3 in the nucleosome core of centromeric chromatin that serves as an assembly site for the inner kinetochore. Required for recruitment and assembly of kinetochore proteins, mitotic progression and chromosome segregation. May serve as an epigenetic mark that propagates centromere identity through replication and cell division. Required for functional chromatin architecture at the yeast 2-micron circle partitioning locus and promotes equal plasmid segregation. The chain is Histone H3-like centromeric protein CSE4 (CSE4) from Saccharomyces cerevisiae (strain ATCC 204508 / S288c) (Baker's yeast).